A 27-amino-acid polypeptide reads, in one-letter code: rRNA/tRNA 2'-O-methyltransferase fibrillarin (27 aa).

Residues 1–12 (XFEGRGGFGGRG) show a composition bias toward gly residues. Residues 1 to 27 (XFEGRGGFGGRGGGDRGGRGXGGFGGG) are disordered. Asymmetric dimethylarginine is present on residues R5, R11, R16, and R19.

This sequence belongs to the methyltransferase superfamily. Fibrillarin family. Component of box C/D small nucleolar ribonucleoprotein (snoRNP) particles. It is associated with the U3, U8 and U13 small nuclear RNAs.

It localises to the nucleus. The protein localises to the nucleolus. It carries out the reaction L-glutaminyl-[histone H2A] + S-adenosyl-L-methionine = N(5)-methyl-L-glutaminyl-[histone H2A] + S-adenosyl-L-homocysteine + H(+). S-adenosyl-L-methionine-dependent methyltransferase that has the ability to methylate both RNAs and proteins. Involved in pre-rRNA processing. Utilizes the methyl donor S-adenosyl-L-methionine to catalyze the site-specific 2'-hydroxyl methylation of ribose moieties in pre-ribosomal RNA. Site specificity is provided by a guide RNA that base pairs with the substrate. Methylation occurs at a characteristic distance from the sequence involved in base pairing with the guide RNA. Also acts as a protein methyltransferase by mediating methylation of 'Gln-105' of histone H2A (H2AQ105me), a modification that impairs binding of the FACT complex and is specifically present at 35S ribosomal DNA locus. The sequence is that of rRNA/tRNA 2'-O-methyltransferase fibrillarin from Physarum polycephalum (Slime mold).